Here is a 394-residue protein sequence, read N- to C-terminus: Elongation factor Tu (394 aa).

Residues 10-204 (KPHVNIGTIG…AVDSYIPQPV (195 aa)) enclose the tr-type G domain. The interval 19–26 (GHVDHGKT) is G1. 19 to 26 (GHVDHGKT) is a binding site for GTP. A Mg(2+)-binding site is contributed by threonine 26. The tract at residues 60–64 (GITIS) is G2. Residues 81-84 (DCPG) are G3. GTP-binding positions include 81-85 (DCPGH) and 136-139 (NKID). Positions 136-139 (NKID) are G4. The tract at residues 174 to 176 (SAL) is G5.

This sequence belongs to the TRAFAC class translation factor GTPase superfamily. Classic translation factor GTPase family. EF-Tu/EF-1A subfamily. As to quaternary structure, monomer.

The protein localises to the cytoplasm. It catalyses the reaction GTP + H2O = GDP + phosphate + H(+). GTP hydrolase that promotes the GTP-dependent binding of aminoacyl-tRNA to the A-site of ribosomes during protein biosynthesis. The polypeptide is Elongation factor Tu (Rickettsia peacockii (strain Rustic)).